Here is a 56-residue protein sequence, read N- to C-terminus: Venom peptide 5 (56 aa).

A signal peptide spans 1 to 26; that stretch reads MKTASFILSFVVLLIVIITWIGEVSA. The propeptide occupies 27–42; the sequence is VSEPEPVAKATAHAAA. Cysteines 49 and 54 form a disulfide.

Post-translationally, probably contains 1 disulfide bond, which may be crucial for activity, since the linear peptide without disulfide bond is inactive. Expressed by the venom gland.

It is found in the secreted. The sequence is that of Venom peptide 5 from Eumenes pomiformis (Potter wasp).